The primary structure comprises 200 residues: Holliday junction branch migration complex subunit RuvA (200 aa).

The segment at 1–64 (MIGQLTGLVG…EDAIQLFGFA (64 aa)) is domain I. The segment at 65–143 (TTDERDWFRL…KMPGGGGTVS (79 aa)) is domain II. Residues 144-148 (APGIV) form a flexible linker region. The domain III stretch occupies residues 149-200 (SGPSVENDALLALAGLGFRRAEAWPVLSKVLAENENATLDLAIRLSLKDLAR).

The protein belongs to the RuvA family. As to quaternary structure, homotetramer. Forms an RuvA(8)-RuvB(12)-Holliday junction (HJ) complex. HJ DNA is sandwiched between 2 RuvA tetramers; dsDNA enters through RuvA and exits via RuvB. An RuvB hexamer assembles on each DNA strand where it exits the tetramer. Each RuvB hexamer is contacted by two RuvA subunits (via domain III) on 2 adjacent RuvB subunits; this complex drives branch migration. In the full resolvosome a probable DNA-RuvA(4)-RuvB(12)-RuvC(2) complex forms which resolves the HJ.

The protein localises to the cytoplasm. Its function is as follows. The RuvA-RuvB-RuvC complex processes Holliday junction (HJ) DNA during genetic recombination and DNA repair, while the RuvA-RuvB complex plays an important role in the rescue of blocked DNA replication forks via replication fork reversal (RFR). RuvA specifically binds to HJ cruciform DNA, conferring on it an open structure. The RuvB hexamer acts as an ATP-dependent pump, pulling dsDNA into and through the RuvAB complex. HJ branch migration allows RuvC to scan DNA until it finds its consensus sequence, where it cleaves and resolves the cruciform DNA. The protein is Holliday junction branch migration complex subunit RuvA of Gluconobacter oxydans (strain 621H) (Gluconobacter suboxydans).